The primary structure comprises 1921 residues: Mediator of RNA polymerase II transcription subunit 13 (1921 aa).

Glycyl lysine isopeptide (Lys-Gly) (interchain with G-Cter in ubiquitin) cross-links involve residues Lys-220 and Lys-226. Disordered stretches follow at residues 400-434 (YEKNGYNSSGSSRNSSISSTSSASSGSGWRMTSRT), 702-724 (TQVEGRKGRHDKLPTVISDNSST), and 1485-1528 (SPTF…GDVS). The segment covering 407 to 427 (SSGSSRNSSISSTSSASSGSG) has biased composition (low complexity). Polar residues-rich tracts occupy residues 1486–1496 (PTFTSLGSESS) and 1515–1527 (EGITSGSSSQGDV).

This sequence belongs to the Mediator complex subunit 13 family. Component of the Mediator complex. Interacts with CYCC1-2 (CDK8 homolog). Ubiquitous. Highest expression in the shoot apex.

The protein resides in the nucleus. Component of the Mediator complex, a coactivator involved in the regulated transcription of nearly all RNA polymerase II-dependent genes. Mediator functions as a bridge to convey information from gene-specific regulatory proteins to the basal RNA polymerase II transcription machinery. The Mediator complex, having a compact conformation in its free form, is recruited to promoters by direct interactions with regulatory proteins and serves for the assembly of a functional preinitiation complex with RNA polymerase II and the general transcription factors. Acts closely together with MAB12. Involved in the regulation of embryo patterning and cotyledon organogenesis. May act through transient repression of specific genes such as the ones responsive to auxin. The chain is Mediator of RNA polymerase II transcription subunit 13 (MED13) from Arabidopsis thaliana (Mouse-ear cress).